We begin with the raw amino-acid sequence, 767 residues long: MNSIKATKGLLALSQQDDLMDLTSNYPLSASEDEGDSDGERKHQKLLEAIGSLSGKNRWKLPERSEAGLKVSEFNVSSEGSGEKLALSDLLGPLKPSSSLAAVKKQLSRVKSKKTLELPLHKREVEQIHREVAFSKTSQTLSKWDSVVQKNREAEQLVFPLEKEPSSFAPMEHVFREWKARTPLEQEVFNLLHKNKQPVTDPLLTPVEKASLKAMSLEEAKIRRAELQRARALQSYYEARARRMKKIKSKKYHKIVKKGKAKKALKDFEQLRKVDPDAALEELEKMEKARMMERMSLKHQNSGKWAKSKAIMAKYDLEARQAMQEQLAKNKELTQKLQVVSESEEEGGADEEEALVPDIVNEVQKTADGPNPWMLRSCSRDAKENEIQADSEQLPESAAHEFPENEENDKPVAEEDELLKELEKRRSLRKRSELNQAAEPLGNQETKDSTSQEVLSELRALSKKLSKENHLSKKQKKSPAKAVDLVWEEEPAPEEDEPLLLQRPERMRTLEELEELGKEDSLPNKERPRPSVEGEQVRRNPQNHSKGKNKKEQMISLQNLLTTRTPSVTSLALPTTVEELEDEGARDQKQMIKEAFAGDDVIKEFLKEKREAIQANKPKAVDLTLPGWGEWGGMNLKPSARKRRRFLIKAPEGPPRKDKNLPNVIISEKRNIHAAAHQVRVLPYPFTHHQQFERTIQNPIGSTWNTQRAFQKLTAPKVVTKPGHIIKPITAEDVDCRSSPRSDVPVMQSNPKQHSKHQKQRKKSSIG.

Residues 23–49 (TSNYPLSASEDEGDSDGERKHQKLLEA) are disordered. S29, S31, S37, S52, S77, and S81 each carry phosphoserine. A Glycyl lysine isopeptide (Lys-Gly) (interchain with G-Cter in SUMO2) cross-link involves residue K122. Phosphothreonine is present on T205. A coiled-coil region spans residues 317–346 (LEARQAMQEQLAKNKELTQKLQVVSESEEE). The segment at 338–554 (QVVSESEEEG…SKGKNKKEQM (217 aa)) is disordered. Residues 342 to 355 (ESEEEGGADEEEAL) are compositionally biased toward acidic residues. Basic and acidic residues predominate over residues 398-433 (AAHEFPENEENDKPVAEEDELLKELEKRRSLRKRSE). Citrulline is present on R431. K447 participates in a covalent cross-link: Glycyl lysine isopeptide (Lys-Gly) (interchain with G-Cter in SUMO2). A Phosphoserine modification is found at S451. The segment covering 486-498 (VWEEEPAPEEDEP) has biased composition (acidic residues). Basic and acidic residues predominate over residues 503–538 (RPERMRTLEELEELGKEDSLPNKERPRPSVEGEQVR). Residue K518 forms a Glycyl lysine isopeptide (Lys-Gly) (interchain with G-Cter in SUMO2) linkage. Citrulline is present on R586. A disordered region spans residues 730-767 (TAEDVDCRSSPRSDVPVMQSNPKQHSKHQKQRKKSSIG). Residues 753-767 (QHSKHQKQRKKSSIG) are compositionally biased toward basic residues.

This sequence belongs to the UTP14 family. Interacts with DHX37. In terms of processing, citrullinated by PADI4. Ubiquitously expressed.

It localises to the nucleus. It is found in the nucleolus. Its function is as follows. May be required for ribosome biogenesis. The polypeptide is U3 small nucleolar RNA-associated protein 14 homolog A (Utp14a) (Mus musculus (Mouse)).